A 316-amino-acid chain; its full sequence is 4-amino-5-hydroxymethyl-2-methylpyrimidine phosphate synthase (316 aa).

Residue Lys-66 is modified to N6-(pyridoxal phosphate)lysine. His-70 is a catalytic residue. 118–121 contributes to the pyridoxal 5'-phosphate binding site; the sequence is GEFG. The CCCFC; essential for catalytic activity, may be the site of iron coordination motif lies at 191–195; that stretch reads CCCFC.

The protein belongs to the NMT1/THI5 family. Homodimer. Fe cation is required as a cofactor.

It carries out the reaction N(6)-(pyridoxal phosphate)-L-lysyl-[4-amino-5-hydroxymethyl-2-methylpyrimidine phosphate synthase] + L-histidyl-[4-amino-5-hydroxymethyl-2-methylpyrimidine phosphate synthase] + 2 Fe(3+) + 4 H2O = L-lysyl-[4-amino-5-hydroxymethyl-2-methylpyrimidine phosphate synthase] + (2S)-2-amino-5-hydroxy-4-oxopentanoyl-[4-amino-5-hydroxymethyl-2-methylpyrimidine phosphate synthase] + 4-amino-2-methyl-5-(phosphooxymethyl)pyrimidine + 3-oxopropanoate + 2 Fe(2+) + 2 H(+). The protein operates within cofactor biosynthesis; thiamine diphosphate biosynthesis. Its function is as follows. Responsible for the formation of the pyrimidine heterocycle in the thiamine biosynthesis pathway. Catalyzes the formation of hydroxymethylpyrimidine phosphate (HMP-P) from histidine and pyridoxal phosphate (PLP). The protein uses PLP and the active site histidine to form HMP-P, generating an inactive enzyme. The enzyme can only undergo a single turnover, which suggests it is a suicide enzyme. The sequence is that of 4-amino-5-hydroxymethyl-2-methylpyrimidine phosphate synthase from Legionella pneumophila subsp. pneumophila (strain Philadelphia 1 / ATCC 33152 / DSM 7513).